Consider the following 437-residue polypeptide: MSMFLDTAKISVQAGRGGDGMVAFRREKYVPNGGPWGGDGGKGGSVIFRVDEGLRTLMDFRYNRKFKAKSGEKGMTKGMHGRGAEDLIVFVPQGTTVRDAETGKVITDLVEHGQEVVIAKGGRGGRGNIRFATPRNPAPEIAENGEPGEERQLELELKILADVGLVGFPSVGKSTLLSVVSSAKPKIGAYHFTTIVPNLGMVRTKSGDSFAMADLPGLIEGASQGVGLGTQFLRHIERTRVILHVIDMSASEGRDPYEDYVSINNELETYNLRLMERPQIIVANKMDIPEAQENLKAFKKKLAAQYDEFDDLPMIFPISSLAHQGLENLLEATAELLAKTDEFLLYDESDLVDEEAYYGFAETEKDFEITRDDDATWVLSGEKLERLFVMTNMERDESIMKFARQLRGMGVDEALRERGAKDGDPVRIGKFEFEFVD.

Positions 2-160 (SMFLDTAKIS…RQLELELKIL (159 aa)) constitute an Obg domain. The OBG-type G domain occupies 161–338 (ADVGLVGFPS…LLEATAELLA (178 aa)). GTP-binding positions include 167-174 (GFPSVGKS), 192-196 (FTTIV), 214-217 (DLPG), 284-287 (NKMD), and 319-321 (SSL). Mg(2+) contacts are provided by Ser174 and Thr194. The 79-residue stretch at 359–437 (GFAETEKDFE…IGKFEFEFVD (79 aa)) folds into the OCT domain.

The protein belongs to the TRAFAC class OBG-HflX-like GTPase superfamily. OBG GTPase family. Monomer. Requires Mg(2+) as cofactor.

The protein resides in the cytoplasm. An essential GTPase which binds GTP, GDP and possibly (p)ppGpp with moderate affinity, with high nucleotide exchange rates and a fairly low GTP hydrolysis rate. Plays a role in control of the cell cycle, stress response, ribosome biogenesis and in those bacteria that undergo differentiation, in morphogenesis control. The chain is GTPase Obg from Streptococcus pyogenes serotype M1.